The sequence spans 101 residues: Large ribosomal subunit protein bL27 (101 aa).

A propeptide spanning residues 1 to 9 (MLLMNLQLF) is cleaved from the precursor.

Belongs to the bacterial ribosomal protein bL27 family. In terms of processing, the N-terminus is cleaved by ribosomal processing cysteine protease Prp.

The polypeptide is Large ribosomal subunit protein bL27 (Clostridium tetani (strain Massachusetts / E88)).